Here is a 119-residue protein sequence, read N- to C-terminus: MPRVKRGVTARARHKKVIAAAKGYRGRRGNVFRIAKQAVMRAGQYAYRDRRNKKRTFRALWITRINAAVREQGMSYSVFIAGLKKASIDLDRKVLADLAVRDKAGFAAIVQQAKAALSA.

The protein belongs to the bacterial ribosomal protein bL20 family.

Functionally, binds directly to 23S ribosomal RNA and is necessary for the in vitro assembly process of the 50S ribosomal subunit. It is not involved in the protein synthesizing functions of that subunit. The sequence is that of Large ribosomal subunit protein bL20 from Bordetella petrii (strain ATCC BAA-461 / DSM 12804 / CCUG 43448).